A 121-amino-acid polypeptide reads, in one-letter code: Fluoride-specific ion channel FluC (121 aa).

Helical transmembrane passes span 5–25 (LLIF…TISI), 33–53 (FPWG…VFYT), 66–83 (LMLT…STFS), and 98–118 (FFTY…LGIW). Na(+) contacts are provided by glycine 74 and threonine 77.

Belongs to the fluoride channel Fluc/FEX (TC 1.A.43) family.

It is found in the cell inner membrane. It carries out the reaction fluoride(in) = fluoride(out). With respect to regulation, na(+) is not transported, but it plays an essential structural role and its presence is essential for fluoride channel function. In terms of biological role, fluoride-specific ion channel. Important for reducing fluoride concentration in the cell, thus reducing its toxicity. The protein is Fluoride-specific ion channel FluC of Phocaeicola vulgatus (strain ATCC 8482 / DSM 1447 / JCM 5826 / CCUG 4940 / NBRC 14291 / NCTC 11154) (Bacteroides vulgatus).